A 294-amino-acid chain; its full sequence is tRNA dimethylallyltransferase (294 aa).

ATP is bound at residue Gly11 to Thr18. Thr13–Thr18 contributes to the substrate binding site. Residues Asp36–Gln39 form an interaction with substrate tRNA region.

Belongs to the IPP transferase family. As to quaternary structure, monomer. Mg(2+) is required as a cofactor.

The enzyme catalyses adenosine(37) in tRNA + dimethylallyl diphosphate = N(6)-dimethylallyladenosine(37) in tRNA + diphosphate. In terms of biological role, catalyzes the transfer of a dimethylallyl group onto the adenine at position 37 in tRNAs that read codons beginning with uridine, leading to the formation of N6-(dimethylallyl)adenosine (i(6)A). The sequence is that of tRNA dimethylallyltransferase from Lactococcus lactis subsp. cremoris (strain MG1363).